Here is a 92-residue protein sequence, read N- to C-terminus: Small ribosomal subunit protein uS19 (92 aa).

This sequence belongs to the universal ribosomal protein uS19 family.

In terms of biological role, protein S19 forms a complex with S13 that binds strongly to the 16S ribosomal RNA. This is Small ribosomal subunit protein uS19 from Roseobacter denitrificans (strain ATCC 33942 / OCh 114) (Erythrobacter sp. (strain OCh 114)).